The primary structure comprises 773 residues: Membrane-bound aldehyde dehydrogenase [pyrroloquinoline-quinone] (773 aa).

The segment at residues 1-44 is a signal peptide (tat-type signal); it reads MGRLNRFRLGKDGRREQASLSRRGFLVTSLGAGVMFGFARPSSA.

Requires pyrroloquinoline quinone as cofactor. Predicted to be exported by the Tat system. The position of the signal peptide cleavage has been experimentally proven.

It is found in the cell inner membrane. The catalysed reaction is an aldehyde + a quinone + H2O = a quinol + a carboxylate + H(+). In Gluconacetobacter polyoxogenes (Acetobacter polyoxogenes), this protein is Membrane-bound aldehyde dehydrogenase [pyrroloquinoline-quinone].